The sequence spans 195 residues: MKKRALIVLAALVLASCTSRKPASPPAPIEPVPPPVTVSVQPPPPATSEPVPMPPKIKTIDWQASLSPLVQQMLAVEGINDGSVLLVNTMKNTTNGSVQTGKATAALTRLITDAGGKFQVVGANQLNAARQMLGLSADDSLESRSKAVGLARYLNAQYVLYSAAAGDVKQPTLDLQLMLVQTGEIIWSGNGVAQD.

An N-terminal signal peptide occupies residues 1–16; sequence MKKRALIVLAALVLAS. Cys-17 is lipidated: N-palmitoyl cysteine. Cys-17 carries the S-diacylglycerol cysteine lipid modification. A disordered region spans residues 19–51; it reads SRKPASPPAPIEPVPPPVTVSVQPPPPATSEPV. A compositionally biased stretch (pro residues) spans 23-51; that stretch reads ASPPAPIEPVPPPVTVSVQPPPPATSEPV.

This sequence belongs to the LpoB family. As to quaternary structure, interacts with PBP1b.

Its subcellular location is the cell outer membrane. Regulator of peptidoglycan synthesis that is essential for the function of penicillin-binding protein 1B (PBP1b). This is Penicillin-binding protein activator LpoB from Sodalis glossinidius (strain morsitans).